Here is an 81-residue protein sequence, read N- to C-terminus: Cytotoxin 3 (81 aa).

The N-terminal stretch at 1–21 is a signal peptide; the sequence is MKTLLLTLVVVTIVCLDLGYT. Intrachain disulfides connect cysteine 24-cysteine 42, cysteine 35-cysteine 59, cysteine 63-cysteine 74, and cysteine 75-cysteine 80.

The protein belongs to the three-finger toxin family. Short-chain subfamily. Type IA cytotoxin sub-subfamily. As to quaternary structure, monomer in solution; Homodimer and oligomer in the presence of negatively charged lipids forming a pore with a size ranging between 20 and 30 Angstroms. Interacts with Kv channel-interacting protein 1 (KCNIP1) in a calcium-independent manner. In terms of tissue distribution, expressed by the venom gland.

The protein localises to the secreted. Its subcellular location is the target cell membrane. Functionally, basic protein that binds to cell membrane and depolarizes cardiomyocytes. This cytotoxin also possesses lytic activity on many other cells, including red blood cells. Interaction with sulfatides in the cell membrane induces pore formation and cell internalization. Cytotoxicity is due to pore formation, and to another mechanism independent of membrane-damaging activity. When internalized, it targets the mitochondrial membrane and induces mitochondrial swelling and fragmentation. It inhibits protein kinases C. It binds to the integrin alpha-V/beta-3 (ITGAV/ITGB3) with a moderate affinity. It also binds with high affinity to heparin. The polypeptide is Cytotoxin 3 (Naja atra (Chinese cobra)).